Consider the following 146-residue polypeptide: Large ribosomal subunit protein uL15 (146 aa).

Residues 1 to 13 (MKLHELKPAEGSR) show a composition bias toward basic and acidic residues. The tract at residues 1–48 (MKLHELKPAEGSRKVRNRVGRGIGSGNGKTAGKGHKGQNARSGGGVRL) is disordered. Over residues 21-31 (RGIGSGNGKTA) the composition is skewed to gly residues.

It belongs to the universal ribosomal protein uL15 family. Part of the 50S ribosomal subunit.

Binds to the 23S rRNA. The polypeptide is Large ribosomal subunit protein uL15 (Bacillus cytotoxicus (strain DSM 22905 / CIP 110041 / 391-98 / NVH 391-98)).